The sequence spans 448 residues: tRNA(Ile)-lysidine synthase (448 aa).

30-35 (GGGADS) contributes to the ATP binding site.

This sequence belongs to the tRNA(Ile)-lysidine synthase family.

It is found in the cytoplasm. It carries out the reaction cytidine(34) in tRNA(Ile2) + L-lysine + ATP = lysidine(34) in tRNA(Ile2) + AMP + diphosphate + H(+). Its function is as follows. Ligates lysine onto the cytidine present at position 34 of the AUA codon-specific tRNA(Ile) that contains the anticodon CAU, in an ATP-dependent manner. Cytidine is converted to lysidine, thus changing the amino acid specificity of the tRNA from methionine to isoleucine. The protein is tRNA(Ile)-lysidine synthase of Idiomarina loihiensis (strain ATCC BAA-735 / DSM 15497 / L2-TR).